The sequence spans 235 residues: Modulator of macroautophagy TMEM150B (235 aa).

The Cytoplasmic segment spans residues 1–8 (MWGYLSLL). The chain crosses the membrane as a helical span at residues 9–29 (PMCLAFWAIAGIWTVFSLAVV). The Extracellular segment spans residues 30 to 51 (NKAVNLTDGFPYISVCGNVPPQ). A glycan (N-linked (GlcNAc...) asparagine) is linked at Asn-34. The chain crosses the membrane as a helical span at residues 52–72 (SCIFSQVLNIGAASAAWICIL). The Cytoplasmic segment spans residues 73–88 (RYYQLRDWGVRKWHNQ). Residues 89 to 109 (VILWTGLLCALGTSIVGNFQE) form a helical membrane-spanning segment. Topologically, residues 110–116 (KNQRATH) are extracellular. A helical transmembrane segment spans residues 117-137 (LTGAFLAFFVGIVYFWLQLFL). At 138-156 (SWRMKNLPQPGAPWIGPLR) the chain is on the cytoplasmic side. Residues 157–177 (LVLCSACFILEVAMVVLHSWS) form a helical membrane-spanning segment. Residues 178–180 (MRS) are Extracellular-facing. A helical transmembrane segment spans residues 181-201 (VSAICEWVAAMLLFILFGLLA). Residues 202–235 (VDFSRLDSCTLCLQPGSGSLRPPPDSPTSLHVQL) are Cytoplasmic-facing.

The protein belongs to the DRAM/TMEM150 family.

The protein localises to the cell membrane. Its subcellular location is the endosome membrane. The protein resides in the cytoplasmic vesicle. It is found in the autophagosome membrane. Functionally, modulator of macroautophagy that causes accumulation of autophagosomes under basal conditions and enhances autophagic flux. Represses cell death and promotes long-term clonogenic survival of cells grown in the absence of glucose in a macroautophagy-independent manner. May have some role in extracellular matrix engulfment or growth factor receptor recycling, both of which can modulate cell survival. This Bos taurus (Bovine) protein is Modulator of macroautophagy TMEM150B.